The following is a 314-amino-acid chain: Methionyl-tRNA formyltransferase (314 aa).

113 to 116 (SLLP) contacts (6S)-5,6,7,8-tetrahydrofolate.

This sequence belongs to the Fmt family.

It carries out the reaction L-methionyl-tRNA(fMet) + (6R)-10-formyltetrahydrofolate = N-formyl-L-methionyl-tRNA(fMet) + (6S)-5,6,7,8-tetrahydrofolate + H(+). Attaches a formyl group to the free amino group of methionyl-tRNA(fMet). The formyl group appears to play a dual role in the initiator identity of N-formylmethionyl-tRNA by promoting its recognition by IF2 and preventing the misappropriation of this tRNA by the elongation apparatus. This is Methionyl-tRNA formyltransferase from Pseudomonas savastanoi pv. phaseolicola (strain 1448A / Race 6) (Pseudomonas syringae pv. phaseolicola (strain 1448A / Race 6)).